The following is a 297-amino-acid chain: MTEKQFRSGFVSIIGRPNVGKSTLLNRILGDKIVITSDKPQTTRNRIQGIHNLPGCQMVFIDTPGIHRAKSKLNKYMVDVALSSIKEVDVILFLVEADAKPANQEGMILELLANADAPVLLVINKIDLVAKEALLERIAAYAALYPFREIVPVSALSGDGVERLVEVVHGFIPAGPPYFPDDILTDLPERFIVAEMIREKIFRLTHDEVPYSVAVVVESFKERADGLVSIAAAINVERESQKGIVIGKKGEMLKRIGMQARREIEELLDTKVFLELFVRVSKEWSENTRMLKEFGYE.

The Era-type G domain occupies 7–174 (RSGFVSIIGR…VEVVHGFIPA (168 aa)). A G1 region spans residues 15-22 (GRPNVGKS). A GTP-binding site is contributed by 15-22 (GRPNVGKS). Residues 41-45 (QTTRN) form a G2 region. The tract at residues 62 to 65 (DTPG) is G3. Residues 62 to 66 (DTPGI) and 124 to 127 (NKID) each bind GTP. The segment at 124–127 (NKID) is G4. Residues 153–155 (VSA) are G5. The KH type-2 domain maps to 205 to 282 (THDEVPYSVA…FLELFVRVSK (78 aa)).

The protein belongs to the TRAFAC class TrmE-Era-EngA-EngB-Septin-like GTPase superfamily. Era GTPase family. As to quaternary structure, monomer.

Its subcellular location is the cytoplasm. The protein localises to the cell inner membrane. An essential GTPase that binds both GDP and GTP, with rapid nucleotide exchange. Plays a role in 16S rRNA processing and 30S ribosomal subunit biogenesis and possibly also in cell cycle regulation and energy metabolism. The chain is GTPase Era from Geotalea uraniireducens (strain Rf4) (Geobacter uraniireducens).